The following is a 173-amino-acid chain: Bursicon (173 aa).

A signal peptide spans 1-32; the sequence is MLRHLLRHENNKVFVLILLYCVLVSILKLCTA. Cystine bridges form between cysteine 52–cysteine 101, cysteine 66–cysteine 115, cysteine 76–cysteine 136, cysteine 80–cysteine 138, and cysteine 98–cysteine 141. A CTCK domain is found at 52–142; the sequence is CQVTPVIHVL…PLECMCRPCT (91 aa).

As to quaternary structure, heterodimer of Burs and Pburs. As to expression, expressed in one to two pairs of neurons in each of the thoracic and abdominal neuromeres of the larval CNS. Coexpressed with CCAP in most CCAP-specific neurons. Coexpressed with Pburs in four bilateral neurons in thoracic and abdominal neuromeres of the ventral nervous system.

It localises to the secreted. In terms of biological role, final heterodimeric neurohormone released at the end of the molting cycle, involved in the sclerotization (tanning) of the insect cuticle, melanization and wing spreading. Heterodimer specifically activates the G protein-coupled receptor rk. The chain is Bursicon from Drosophila melanogaster (Fruit fly).